The sequence spans 476 residues: NADH-quinone oxidoreductase subunit N (476 aa).

14 consecutive transmembrane segments (helical) span residues 5–25 (LALI…LMLG), 38–58 (LSAL…FGVE), 70–90 (AFGG…ILVA), 97–117 (GMRA…GIMA), 122–142 (LMTL…LASF), 157–177 (FVLG…LYGF), 196–218 (IGLI…AVPF), 231–253 (TPVT…ARIV), 264–284 (WQQI…VGAI), 292–312 (LLAY…AAGT), 318–338 (GVLT…LVVL), 364–384 (LAAA…LFGF), 401–421 (PLAV…IAII), and 445–465 (IVAA…PALA).

Belongs to the complex I subunit 2 family. NDH-1 is composed of 14 different subunits. Subunits NuoA, H, J, K, L, M, N constitute the membrane sector of the complex.

It localises to the cell inner membrane. The enzyme catalyses a quinone + NADH + 5 H(+)(in) = a quinol + NAD(+) + 4 H(+)(out). NDH-1 shuttles electrons from NADH, via FMN and iron-sulfur (Fe-S) centers, to quinones in the respiratory chain. The immediate electron acceptor for the enzyme in this species is believed to be ubiquinone. Couples the redox reaction to proton translocation (for every two electrons transferred, four hydrogen ions are translocated across the cytoplasmic membrane), and thus conserves the redox energy in a proton gradient. The protein is NADH-quinone oxidoreductase subunit N of Sphingopyxis alaskensis (strain DSM 13593 / LMG 18877 / RB2256) (Sphingomonas alaskensis).